Reading from the N-terminus, the 659-residue chain is Zeaxanthin epoxidase, chloroplastic (659 aa).

The transit peptide at 1-50 (MALLSATAPAKTRFSLFSHEEAQHPHPHALSACCGGGASGKRQRARARVA) directs the protein to the chloroplast. FAD-binding positions include 79–107 (RVLVAGGGIGGLVLALAARRKGYEVTVFE) and 357–370 (TFNWGKGRVTLLGD). An FHA domain is found at 553-607 (LSIGSRSDPSNSTASLALPLPQISENHATITCKNKAFYVTDNGSEHGTWITDNEG).

Requires FAD as cofactor. Expressed in young microspores.

Its subcellular location is the plastid. It localises to the chloroplast membrane. It is found in the chloroplast thylakoid membrane. It carries out the reaction all-trans-zeaxanthin + 4 reduced [2Fe-2S]-[ferredoxin] + 2 O2 + 4 H(+) = all-trans-violaxanthin + 4 oxidized [2Fe-2S]-[ferredoxin] + 2 H2O. The protein operates within plant hormone biosynthesis; abscisate biosynthesis. Its function is as follows. Zeaxanthin epoxidase that plays an important role in the xanthophyll cycle and abscisic acid (ABA) biosynthesis. Converts zeaxanthin into antheraxanthin and subsequently violaxanthin. Required for resistance to osmotic and drought stresses, seed development and dormancy. This Oryza sativa subsp. japonica (Rice) protein is Zeaxanthin epoxidase, chloroplastic (ZEP).